The following is a 312-amino-acid chain: Zinc-finger homeodomain protein 4 (312 aa).

A disordered region spans residues 20 to 74 (GGGGSHGHMIHHHDHHAANSAPPTHNNNNTTQPPPMPLHGNGHGNNYDHHHHQDP). The segment covering 37 to 50 (ANSAPPTHNNNNTT) has biased composition (low complexity). A ZF-HD dimerization-type; degenerate zinc finger spans residues 90-139 (YKECLKNHAAAMGGNATDGCGEFMPSGEDGSIEALTCSACNCHRNFHRKE). Positions 218-281 (KKRFRTKFTP…NNKIHFSKKN (64 aa)) form a DNA-binding region, homeobox.

Homo- and heterodimer with other ZFHD proteins. Interacts with ZHD1, ZHD2, ZHD5, ZHD7, ZHD8, ZHD10 and ZHD11. As to expression, mostly expressed in flowers and inflorescence.

The protein resides in the nucleus. Putative transcription factor. Probably involved in the regulation of floral induction. The polypeptide is Zinc-finger homeodomain protein 4 (ZHD4) (Arabidopsis thaliana (Mouse-ear cress)).